Reading from the N-terminus, the 180-residue chain is Ribulose bisphosphate carboxylase small subunit, chloroplastic 3 (180 aa).

Residues 1 to 56 (MASSLMSNAITAVVGASGAQANMVAPFNGLKSIASFPVTRKSNDITSIASNGGRVQ) constitute a chloroplast transit peptide.

The protein belongs to the RuBisCO small chain family. Heterohexadecamer of 8 large and 8 small subunits.

It is found in the plastid. It localises to the chloroplast. Functionally, ruBisCO catalyzes two reactions: the carboxylation of D-ribulose 1,5-bisphosphate, the primary event in carbon dioxide fixation, as well as the oxidative fragmentation of the pentose substrate. Both reactions occur simultaneously and in competition at the same active site. Although the small subunit is not catalytic it is essential for maximal activity. This Amaranthus hypochondriacus (Prince-of-Wales feather) protein is Ribulose bisphosphate carboxylase small subunit, chloroplastic 3.